The primary structure comprises 122 residues: Fluoride-specific ion channel FluC 2 (122 aa).

Transmembrane regions (helical) follow at residues 3-23, 38-58, 62-82, and 93-113; these read ITAI…RMFI, TSIV…LNLT, LLLL…SFIY, and FMHL…CFYL. Na(+) contacts are provided by glycine 72 and serine 75.

Belongs to the fluoride channel Fluc/FEX (TC 1.A.43) family.

Its subcellular location is the cell inner membrane. The enzyme catalyses fluoride(in) = fluoride(out). Its activity is regulated as follows. Na(+) is not transported, but it plays an essential structural role and its presence is essential for fluoride channel function. Functionally, fluoride-specific ion channel. Important for reducing fluoride concentration in the cell, thus reducing its toxicity. This is Fluoride-specific ion channel FluC 2 from Prochlorococcus marinus (strain MIT 9312).